The following is a 581-amino-acid chain: DNA polymerase alpha subunit B (581 aa).

Belongs to the DNA polymerase alpha subunit B family. DNA polymerase alpha:primase is a four subunit enzyme complex, which is assembled throughout the cell cycle, and consists of the two DNA polymerase subunits A and B, and the DNA primase large and small subunits. Subunit B binds to subunit A.

The protein localises to the nucleus. May play an essential role at the early stage of chromosomal DNA replication by coupling the polymerase alpha/primase complex to the cellular replication machinery. Required for the distribution of pie-1 in cell divsion. In Caenorhabditis elegans, this protein is DNA polymerase alpha subunit B (div-1).